Here is a 784-residue protein sequence, read N- to C-terminus: Ent-kaurene synthase 1, chloroplastic (784 aa).

The transit peptide at 1–28 (MNLSLCIASPLLTKSSRPTALSAIHTAS) directs the protein to the chloroplast. Mg(2+) contacts are provided by D528, D532, N672, and E680. The DDXXD motif motif lies at 528 to 532 (DDFFD).

Belongs to the terpene synthase family. Mg(2+) is required as a cofactor. As to expression, accumulates in leaves.

The protein resides in the plastid. The protein localises to the chloroplast. The enzyme catalyses ent-copalyl diphosphate = ent-kaur-16-ene + diphosphate. The protein operates within secondary metabolite biosynthesis; terpenoid biosynthesis. Its pathway is plant hormone biosynthesis; gibberellin biosynthesis. In terms of biological role, involved in the biosynthesis of ent-kaurene diterpenoids natural products such as oridonin, miltiradiene, eriocalyxin B and nezukol, known to exhibit antitumor, anti-inflammatory and antibacterial activities, and in the production of gibberellins phytohormones. Catalyzes the conversion of ent-copalyl diphosphate (ent-CPP) to ent-kaurene. This chain is Ent-kaurene synthase 1, chloroplastic, found in Stevia rebaudiana (Stevia).